A 305-amino-acid polypeptide reads, in one-letter code: MGLFSRDKPKIKIQTTKKDGFSGWLKCTHCNELIHANELEQNSNCCPKCDYHYRLSTEDRIKSLSNPNTFKPLFQNLQPVDTLNFVDTEPYPKRLANAQEKSTSNEAVVVGTCMINKHKIALGVLDFSFMGGSMGSVVGERLTRLIEHALKEKLPLIIVSTSGGARMQESILSLMQMAKTSGALAKLHEARIPYISVLTNPTTGGVTASFASLGDIIVAEPNALICFAGPRVIEQTIGQRLPPGAQKSEFLLEHGMIDCIVKRPELKQKLAELIDFLKGNFSEENEPSPPPKNLIKKTSPLKDKN.

Residues 23-292 (GWLKCTHCNE…EENEPSPPPK (270 aa)) enclose the CoA carboxyltransferase N-terminal domain. Zn(2+) is bound by residues Cys-27, Cys-30, Cys-46, and Cys-49. The segment at 27 to 49 (CTHCNELIHANELEQNSNCCPKC) adopts a C4-type zinc-finger fold. The tract at residues 281–305 (FSEENEPSPPPKNLIKKTSPLKDKN) is disordered.

It belongs to the AccD/PCCB family. Acetyl-CoA carboxylase is a heterohexamer composed of biotin carboxyl carrier protein (AccB), biotin carboxylase (AccC) and two subunits each of ACCase subunit alpha (AccA) and ACCase subunit beta (AccD). Zn(2+) serves as cofactor.

It localises to the cytoplasm. It carries out the reaction N(6)-carboxybiotinyl-L-lysyl-[protein] + acetyl-CoA = N(6)-biotinyl-L-lysyl-[protein] + malonyl-CoA. It functions in the pathway lipid metabolism; malonyl-CoA biosynthesis; malonyl-CoA from acetyl-CoA: step 1/1. Its function is as follows. Component of the acetyl coenzyme A carboxylase (ACC) complex. Biotin carboxylase (BC) catalyzes the carboxylation of biotin on its carrier protein (BCCP) and then the CO(2) group is transferred by the transcarboxylase to acetyl-CoA to form malonyl-CoA. The protein is Acetyl-coenzyme A carboxylase carboxyl transferase subunit beta of Protochlamydia amoebophila (strain UWE25).